The following is a 215-amino-acid chain: 3-isopropylmalate dehydratase small subunit (215 aa).

This sequence belongs to the LeuD family. LeuD type 1 subfamily. Heterodimer of LeuC and LeuD.

The catalysed reaction is (2R,3S)-3-isopropylmalate = (2S)-2-isopropylmalate. The protein operates within amino-acid biosynthesis; L-leucine biosynthesis; L-leucine from 3-methyl-2-oxobutanoate: step 2/4. Its function is as follows. Catalyzes the isomerization between 2-isopropylmalate and 3-isopropylmalate, via the formation of 2-isopropylmaleate. The chain is 3-isopropylmalate dehydratase small subunit from Polynucleobacter necessarius subsp. necessarius (strain STIR1).